Reading from the N-terminus, the 403-residue chain is MEFDRMLIRYGELSTKGKNRKQFVTKLAQNVKRAMTDLPEVRIHGERDRMYIILNGADYQLVEERLKPIFGIQSFSPAVRVNLDVEEVKAAALALVQDAHEENGTFKVAARRSHREFPLDSNEINQEIGAYVLQNMEDLTVNVKNPDVKLTIDVRKEGVFLSCRTILGAAGLPVGSSGRAMLMLSGGIDSPVAGYLAQKRGVEIEAVHFHSPPYTSEQAKQKAVDLAAKLAKYSGQVQMHIVPFTEIQEVIKQQIPESVIMTVTRRMMLRITDELRRRRNGLAIVNGESLGQVASQTLESMLAINAVTATPIIRPVVSMDKNEIIQIAQKIDTYNLSVQPFEDCCTIFTPPSPKTKPKLDKIEHYESFTDFEALIAKALDNIETISVNVAETAQVKDEFADLF.

The THUMP domain occupies 60–165 (QLVEERLKPI…KEGVFLSCRT (106 aa)). Residues 183–184 (ML), 208–209 (HF), Arg-265, Gly-287, and Gln-296 each bind ATP.

This sequence belongs to the ThiI family.

Its subcellular location is the cytoplasm. It catalyses the reaction [ThiI sulfur-carrier protein]-S-sulfanyl-L-cysteine + a uridine in tRNA + 2 reduced [2Fe-2S]-[ferredoxin] + ATP + H(+) = [ThiI sulfur-carrier protein]-L-cysteine + a 4-thiouridine in tRNA + 2 oxidized [2Fe-2S]-[ferredoxin] + AMP + diphosphate. The enzyme catalyses [ThiS sulfur-carrier protein]-C-terminal Gly-Gly-AMP + S-sulfanyl-L-cysteinyl-[cysteine desulfurase] + AH2 = [ThiS sulfur-carrier protein]-C-terminal-Gly-aminoethanethioate + L-cysteinyl-[cysteine desulfurase] + A + AMP + 2 H(+). Its pathway is cofactor biosynthesis; thiamine diphosphate biosynthesis. Catalyzes the ATP-dependent transfer of a sulfur to tRNA to produce 4-thiouridine in position 8 of tRNAs, which functions as a near-UV photosensor. Also catalyzes the transfer of sulfur to the sulfur carrier protein ThiS, forming ThiS-thiocarboxylate. This is a step in the synthesis of thiazole, in the thiamine biosynthesis pathway. The sulfur is donated as persulfide by IscS. The chain is Probable tRNA sulfurtransferase from Listeria monocytogenes serotype 4b (strain CLIP80459).